Reading from the N-terminus, the 241-residue chain is Small ribosomal subunit protein bS6 (241 aa).

Residues 97–108 (KPKIRERNRKYT) are compositionally biased toward basic residues. The segment at 97-241 (KPKIRERNRK…YNNKKPQSSN (145 aa)) is disordered. Basic and acidic residues predominate over residues 109–118 (PRRDRFEKPN). Composition is skewed to low complexity over residues 130–151 (QDQQATKNQQNFQQNQQNQTSQ) and 161–182 (DDFQQVSSNQQNFGQNQQNQSG). Residues 189 to 202 (RQNQENIHQNSKNH) are compositionally biased toward polar residues.

Belongs to the bacterial ribosomal protein bS6 family.

Binds together with bS18 to 16S ribosomal RNA. In Mesomycoplasma hyopneumoniae (strain 232) (Mycoplasma hyopneumoniae), this protein is Small ribosomal subunit protein bS6.